A 164-amino-acid chain; its full sequence is SsrA-binding protein (164 aa).

The interval 141–164 is disordered; the sequence is KLHDKRQDEKQKSIKKEINSALKR. Positions 145–158 are enriched in basic and acidic residues; sequence KRQDEKQKSIKKEI.

It belongs to the SmpB family.

It is found in the cytoplasm. Required for rescue of stalled ribosomes mediated by trans-translation. Binds to transfer-messenger RNA (tmRNA), required for stable association of tmRNA with ribosomes. tmRNA and SmpB together mimic tRNA shape, replacing the anticodon stem-loop with SmpB. tmRNA is encoded by the ssrA gene; the 2 termini fold to resemble tRNA(Ala) and it encodes a 'tag peptide', a short internal open reading frame. During trans-translation Ala-aminoacylated tmRNA acts like a tRNA, entering the A-site of stalled ribosomes, displacing the stalled mRNA. The ribosome then switches to translate the ORF on the tmRNA; the nascent peptide is terminated with the 'tag peptide' encoded by the tmRNA and targeted for degradation. The ribosome is freed to recommence translation, which seems to be the essential function of trans-translation. The chain is SsrA-binding protein from Prochlorococcus marinus (strain MIT 9301).